Consider the following 484-residue polypeptide: Protein LAZ1 homolog 1 (484 aa).

The signal sequence occupies residues 1–19; it reads MEWRGILCSLLFIVSVGES. A run of 6 helical transmembrane segments spans residues 42-62, 76-96, 190-210, 219-239, 264-284, and 299-319; these read PILS…YLIF, FLIG…LSLV, MILK…GVYG, GYPY…YCLV, IVFL…MGLV, and YIIC…FPAA. The segment at 344 to 364 is disordered; that stretch reads PDPEEVKDSERTTRTRYGRHD. Over residues 347-364 the composition is skewed to basic and acidic residues; it reads EEVKDSERTTRTRYGRHD. The stretch at 406-428 forms a coiled coil; it reads IAKINRTFHQISENVKRFEQQKK. Residues 459 to 484 form a disordered region; sequence VSDSGLGSTNRHHQSRVSGLWTRMRR.

The protein belongs to the TMEM184 family.

Its subcellular location is the membrane. In Arabidopsis thaliana (Mouse-ear cress), this protein is Protein LAZ1 homolog 1.